A 194-amino-acid polypeptide reads, in one-letter code: Molybdenum cofactor guanylyltransferase (194 aa).

Residues 12–14, Lys-25, Asn-53, Asp-70, and Asp-100 contribute to the GTP site; that span reads LAG. Position 100 (Asp-100) interacts with Mg(2+).

Belongs to the MobA family. Monomer. The cofactor is Mg(2+).

It is found in the cytoplasm. The enzyme catalyses Mo-molybdopterin + GTP + H(+) = Mo-molybdopterin guanine dinucleotide + diphosphate. In terms of biological role, transfers a GMP moiety from GTP to Mo-molybdopterin (Mo-MPT) cofactor (Moco or molybdenum cofactor) to form Mo-molybdopterin guanine dinucleotide (Mo-MGD) cofactor. This chain is Molybdenum cofactor guanylyltransferase, found in Vibrio atlanticus (strain LGP32) (Vibrio splendidus (strain Mel32)).